We begin with the raw amino-acid sequence, 461 residues long: Aspartyl/glutamyl-tRNA(Asn/Gln) amidotransferase subunit B (461 aa).

This sequence belongs to the GatB/GatE family. GatB subfamily. As to quaternary structure, heterotrimer of A, B and C subunits.

It catalyses the reaction L-glutamyl-tRNA(Gln) + L-glutamine + ATP + H2O = L-glutaminyl-tRNA(Gln) + L-glutamate + ADP + phosphate + H(+). The enzyme catalyses L-aspartyl-tRNA(Asn) + L-glutamine + ATP + H2O = L-asparaginyl-tRNA(Asn) + L-glutamate + ADP + phosphate + 2 H(+). Allows the formation of correctly charged Asn-tRNA(Asn) or Gln-tRNA(Gln) through the transamidation of misacylated Asp-tRNA(Asn) or Glu-tRNA(Gln) in organisms which lack either or both of asparaginyl-tRNA or glutaminyl-tRNA synthetases. The reaction takes place in the presence of glutamine and ATP through an activated phospho-Asp-tRNA(Asn) or phospho-Glu-tRNA(Gln). In Methanopyrus kandleri (strain AV19 / DSM 6324 / JCM 9639 / NBRC 100938), this protein is Aspartyl/glutamyl-tRNA(Asn/Gln) amidotransferase subunit B.